Reading from the N-terminus, the 205-residue chain is Small ribosomal subunit protein uS5 (205 aa).

The S5 DRBM domain occupies 49-112 (LVDEVLCIDM…TNAKLNIVKV (64 aa)).

This sequence belongs to the universal ribosomal protein uS5 family. In terms of assembly, part of the 30S ribosomal subunit. Contacts protein S4.

Its function is as follows. With S4 and S12 plays an important role in translational accuracy. In Methanocorpusculum labreanum (strain ATCC 43576 / DSM 4855 / Z), this protein is Small ribosomal subunit protein uS5.